The chain runs to 359 residues: MAIEQEHRKKASGWAARDSSGVLSPFNFYRRETGEKDVTFKVLYCGICHSDLHMVKNEWGFSTYPLVPGHEIVGEVTEVGSKVQKFKVGDRVGVGCIVGSCRSCENCTDHLENYCPKQILTYGAKYYDGSTTYGGYSDIMVADEHFIVRIPDNLPLDGAAPLLCAGITTYSPLRYFGLDKPGMHVGVVGLGGLGHVAVKFAKAMGVKVTVISTSPKKEEEALKHLGADSFLVSRDQDQMQAAIGTMDGIIDTVSAQHPLLPLIGLLNSHGKLVMVGAPEKPLELPVFPLLMGRKMVAGSGIGGMKETQEMIDFAARHNITADIEVIPIDYLNTAMERLVKADVRYRFVIDIGNTLKVRS.

Cysteine 48, histidine 70, cysteine 101, cysteine 104, cysteine 107, cysteine 115, and cysteine 164 together coordinate Zn(2+).

The protein belongs to the zinc-containing alcohol dehydrogenase family. Zn(2+) is required as a cofactor.

The enzyme catalyses D-mannitol + NAD(+) = D-mannose + NADH + H(+). In terms of biological role, oxidizes mannitol to mannose. Provides the initial step by which translocated mannitol is committed to central metabolism and, by regulating mannitol pool size, is important in regulating salt tolerance at the cellular level. The sequence is that of Probable mannitol dehydrogenase (CAD) from Fragaria ananassa (Strawberry).